A 63-amino-acid chain; its full sequence is U-reduvitoxin-Pr9a (63 aa).

An N-terminal signal peptide occupies residues 1–19 (MRFFSLFTFLVAFIAAALA). A propeptide spanning residues 20–42 (APVEIGEDLFALRPTGAKRDIIL) is cleaved from the precursor. An intrachain disulfide couples Cys47 to Cys60.

Expressed by the venom gland.

It localises to the secreted. This chain is U-reduvitoxin-Pr9a, found in Platymeris rhadamanthus (Red spot assassin bug).